Reading from the N-terminus, the 615-residue chain is Elongation factor 4 (615 aa).

One can recognise a tr-type G domain in the interval 14–200 (SRIRNFCIIA…KVVELIPAPS (187 aa)). Residues 26–31 (DHGKST) and 147–150 (NKID) each bind GTP.

Belongs to the TRAFAC class translation factor GTPase superfamily. Classic translation factor GTPase family. LepA subfamily.

It is found in the cell membrane. The catalysed reaction is GTP + H2O = GDP + phosphate + H(+). Functionally, required for accurate and efficient protein synthesis under certain stress conditions. May act as a fidelity factor of the translation reaction, by catalyzing a one-codon backward translocation of tRNAs on improperly translocated ribosomes. Back-translocation proceeds from a post-translocation (POST) complex to a pre-translocation (PRE) complex, thus giving elongation factor G a second chance to translocate the tRNAs correctly. Binds to ribosomes in a GTP-dependent manner. In Corynebacterium efficiens (strain DSM 44549 / YS-314 / AJ 12310 / JCM 11189 / NBRC 100395), this protein is Elongation factor 4.